A 681-amino-acid chain; its full sequence is DNA ligase (681 aa).

NAD(+) contacts are provided by residues D33–D37, S83–L84, and E113. K115 serves as the catalytic N6-AMP-lysine intermediate. NAD(+) contacts are provided by R136, E176, K292, and K316. Residues C410, C413, C429, and C435 each contribute to the Zn(2+) site. Residues S599 to A681 enclose the BRCT domain.

Belongs to the NAD-dependent DNA ligase family. LigA subfamily. Requires Mg(2+) as cofactor. The cofactor is Mn(2+).

It catalyses the reaction NAD(+) + (deoxyribonucleotide)n-3'-hydroxyl + 5'-phospho-(deoxyribonucleotide)m = (deoxyribonucleotide)n+m + AMP + beta-nicotinamide D-nucleotide.. Functionally, DNA ligase that catalyzes the formation of phosphodiester linkages between 5'-phosphoryl and 3'-hydroxyl groups in double-stranded DNA using NAD as a coenzyme and as the energy source for the reaction. It is essential for DNA replication and repair of damaged DNA. This Mycobacteroides abscessus (strain ATCC 19977 / DSM 44196 / CCUG 20993 / CIP 104536 / JCM 13569 / NCTC 13031 / TMC 1543 / L948) (Mycobacterium abscessus) protein is DNA ligase.